A 415-amino-acid polypeptide reads, in one-letter code: Gamma-glutamyl phosphate reductase (415 aa).

It belongs to the gamma-glutamyl phosphate reductase family.

Its subcellular location is the cytoplasm. It catalyses the reaction L-glutamate 5-semialdehyde + phosphate + NADP(+) = L-glutamyl 5-phosphate + NADPH + H(+). Its pathway is amino-acid biosynthesis; L-proline biosynthesis; L-glutamate 5-semialdehyde from L-glutamate: step 2/2. In terms of biological role, catalyzes the NADPH-dependent reduction of L-glutamate 5-phosphate into L-glutamate 5-semialdehyde and phosphate. The product spontaneously undergoes cyclization to form 1-pyrroline-5-carboxylate. This Bacillus cereus (strain AH187) protein is Gamma-glutamyl phosphate reductase.